Reading from the N-terminus, the 222-residue chain is Endonuclease V (222 aa).

Mg(2+) is bound by residues D43 and D109.

It belongs to the endonuclease V family. The cofactor is Mg(2+).

The protein resides in the cytoplasm. The enzyme catalyses Endonucleolytic cleavage at apurinic or apyrimidinic sites to products with a 5'-phosphate.. DNA repair enzyme involved in the repair of deaminated bases. Selectively cleaves double-stranded DNA at the second phosphodiester bond 3' to a deoxyinosine leaving behind the intact lesion on the nicked DNA. This is Endonuclease V from Roseiflexus sp. (strain RS-1).